Reading from the N-terminus, the 358-residue chain is Mitogen-activated protein kinase hog-1 (358 aa).

Positions 20 to 299 constitute a Protein kinase domain; sequence YSDLQPVGMG…ATEALSHEYL (280 aa). ATP-binding positions include 26–34 and K49; that span reads VGMGAFGLV. D141 serves as the catalytic Proton acceptor. T171 carries the phosphothreonine modification. Residues 171–173 carry the TXY motif; that stretch reads TGY. Y173 carries the phosphotyrosine modification.

This sequence belongs to the protein kinase superfamily. Ser/Thr protein kinase family. MAP kinase subfamily. HOG1 sub-subfamily. Mg(2+) is required as a cofactor. Post-translationally, dually phosphorylated on Thr-171 and Tyr-173, which activates the enzyme. Phosphorylation is induced by fungicides and osmotic stress.

It is found in the cytoplasm. The protein resides in the nucleus. It carries out the reaction L-seryl-[protein] + ATP = O-phospho-L-seryl-[protein] + ADP + H(+). The enzyme catalyses L-threonyl-[protein] + ATP = O-phospho-L-threonyl-[protein] + ADP + H(+). With respect to regulation, activated by tyrosine and threonine phosphorylation. Its function is as follows. Proline-directed serine/threonine-protein kinase involved in a signal transduction pathway that is activated by changes in the osmolarity of the extracellular environment. Controls osmotic regulation of transcription of target genes. Involved in ion flux-mediated turgor regulation. This Neurospora crassa (strain ATCC 24698 / 74-OR23-1A / CBS 708.71 / DSM 1257 / FGSC 987) protein is Mitogen-activated protein kinase hog-1 (hog-1).